The chain runs to 727 residues: Pre-B-cell leukemia transcription factor-interacting protein 1 (727 aa).

The segment covering 1–10 (MASCPDSDNS) has biased composition (polar residues). The segment at 1 to 135 (MASCPDSDNS…SPHRSLPSSP (135 aa)) is disordered. A compositionally biased stretch (low complexity) spans 39-53 (RAPQSPSRAAAEESA). A Phosphoserine modification is found at S43. Residues 61–70 (TVSQNESSKS) are compositionally biased toward polar residues. Phosphoserine is present on residues S130, S134, S147, S148, and S149. A Phosphothreonine modification is found at T153. Coiled-coil stretches lie at residues 269 to 353 (QNMA…QGAD) and 380 to 421 (SPGF…SLKE). A Nuclear localization signal motif is present at residues 488–506 (WKTEHWKHKKEASGREKSW). Disordered regions lie at residues 491-568 (EHWK…AKDR) and 701-727 (KRSGKKDKHLQNRVVGPREEHSPHRQG). 3 stretches are compositionally biased toward basic and acidic residues: residues 498 to 544 (EASG…EPPR), 551 to 568 (PSGERQKHPRWKEGAKDR), and 716 to 727 (GPREEHSPHRQG). Positions 696 to 719 (DKALKKRSGKKDKHLQNRVVGPRE) match the Nuclear localization signal motif.

In terms of assembly, interacts with ESR1, PBX1, PBX2 and PBX3. Interacts with TEX11.

The protein localises to the cytoplasm. It localises to the cytoskeleton. The protein resides in the nucleus. Its function is as follows. Regulator of pre-B-cell leukemia transcription factors (BPXs) function. Inhibits the binding of PBX1-HOX complex to DNA and blocks the transcriptional activity of E2A-PBX1. Tethers estrogen receptor-alpha (ESR1) to microtubules and allows them to influence estrogen receptors-alpha signaling. In Bos taurus (Bovine), this protein is Pre-B-cell leukemia transcription factor-interacting protein 1 (PBXIP1).